The sequence spans 488 residues: UDP-glycosyltransferase 92A1 (488 aa).

UDP-alpha-D-glucose contacts are provided by residues serine 292, 358-360, 375-383, and 397-400; these read APQ, HCGWNSILE, and AAEQ.

It belongs to the UDP-glycosyltransferase family.

This chain is UDP-glycosyltransferase 92A1 (UGT92A1), found in Arabidopsis thaliana (Mouse-ear cress).